Here is a 336-residue protein sequence, read N- to C-terminus: Effector SCP41 (336 aa).

Residues 1-19 (MRTETASLLLLAALSVAEE) form the signal peptide. Disordered regions lie at residues 59-99 (LFSP…STNN) and 189-230 (PVGN…GQKG). Over residues 63-74 (QQQQQQQQQQQQ) the composition is skewed to low complexity.

As to quaternary structure, interacts with A.thaliana CBP60G; the interaction is direct. Interacts with A.thaliana SARD1. Interacts with G.hirsutum CBP60B.

Its subcellular location is the secreted. The protein resides in the host nucleus. Effector that binds transcription regulators in the host plant to suppress the host's innate immune response. Inhibits the host plant transcription regulators CBP60G and SARD1. The chain is Effector SCP41 from Verticillium dahliae (strain VdLs.17 / ATCC MYA-4575 / FGSC 10137) (Verticillium wilt).